A 156-amino-acid chain; its full sequence is Small ribosomal subunit protein uS7 (156 aa).

Belongs to the universal ribosomal protein uS7 family. As to quaternary structure, part of the 30S ribosomal subunit. Contacts proteins S9 and S11.

Functionally, one of the primary rRNA binding proteins, it binds directly to 16S rRNA where it nucleates assembly of the head domain of the 30S subunit. Is located at the subunit interface close to the decoding center, probably blocks exit of the E-site tRNA. The polypeptide is Small ribosomal subunit protein uS7 (Rhodopseudomonas palustris (strain BisB18)).